The following is a 506-amino-acid chain: Maturase K (506 aa).

It belongs to the intron maturase 2 family. MatK subfamily.

The protein localises to the plastid. The protein resides in the chloroplast. Its function is as follows. Usually encoded in the trnK tRNA gene intron. Probably assists in splicing its own and other chloroplast group II introns. This Phyllodoce caerulea (Blue mountain heath) protein is Maturase K.